A 313-amino-acid polypeptide reads, in one-letter code: 4-hydroxyproline 2-epimerase (313 aa).

The disordered stretch occupies residues 1 to 23 (MHVIDSHTGGEPTRVILSGGPHL). Cys85 functions as the Proton acceptor in the catalytic mechanism. Substrate contacts are provided by residues 86-87 (GH), His205, and Asp231. Cys235 functions as the Proton donor in the catalytic mechanism. Position 236–237 (236–237 (GT)) interacts with substrate.

The protein belongs to the proline racemase family.

It carries out the reaction trans-4-hydroxy-L-proline = cis-4-hydroxy-D-proline. Its function is as follows. Catalyzes the epimerization of trans-4-hydroxy-L-proline (t4LHyp) to cis-4-hydroxy-D-proline (c4DHyp). Is likely involved in a degradation pathway that converts t4LHyp to alpha-ketoglutarate. Displays no proline racemase activity. This Ruegeria pomeroyi (strain ATCC 700808 / DSM 15171 / DSS-3) (Silicibacter pomeroyi) protein is 4-hydroxyproline 2-epimerase.